We begin with the raw amino-acid sequence, 418 residues long: Light-independent protochlorophyllide reductase subunit N (418 aa).

[4Fe-4S] cluster-binding residues include Cys-17, Cys-42, and Cys-103.

This sequence belongs to the BchN/ChlN family. As to quaternary structure, protochlorophyllide reductase is composed of three subunits; ChlL, ChlN and ChlB. Forms a heterotetramer of two ChlB and two ChlN subunits. [4Fe-4S] cluster is required as a cofactor.

The catalysed reaction is chlorophyllide a + oxidized 2[4Fe-4S]-[ferredoxin] + 2 ADP + 2 phosphate = protochlorophyllide a + reduced 2[4Fe-4S]-[ferredoxin] + 2 ATP + 2 H2O. Its pathway is porphyrin-containing compound metabolism; chlorophyll biosynthesis (light-independent). Functionally, component of the dark-operative protochlorophyllide reductase (DPOR) that uses Mg-ATP and reduced ferredoxin to reduce ring D of protochlorophyllide (Pchlide) to form chlorophyllide a (Chlide). This reaction is light-independent. The NB-protein (ChlN-ChlB) is the catalytic component of the complex. This chain is Light-independent protochlorophyllide reductase subunit N, found in Prochlorococcus marinus (strain MIT 9515).